The chain runs to 120 residues: Large ribosomal subunit protein bL12 (120 aa).

The protein belongs to the bacterial ribosomal protein bL12 family. In terms of assembly, homodimer. Part of the ribosomal stalk of the 50S ribosomal subunit. Forms a multimeric L10(L12)X complex, where L10 forms an elongated spine to which 2 to 4 L12 dimers bind in a sequential fashion. Binds GTP-bound translation factors.

In terms of biological role, forms part of the ribosomal stalk which helps the ribosome interact with GTP-bound translation factors. Is thus essential for accurate translation. This Listeria monocytogenes serotype 4b (strain CLIP80459) protein is Large ribosomal subunit protein bL12.